Here is a 298-residue protein sequence, read N- to C-terminus: GTP cyclohydrolase FolE2 (298 aa).

This sequence belongs to the GTP cyclohydrolase IV family.

The catalysed reaction is GTP + H2O = 7,8-dihydroneopterin 3'-triphosphate + formate + H(+). The protein operates within cofactor biosynthesis; 7,8-dihydroneopterin triphosphate biosynthesis; 7,8-dihydroneopterin triphosphate from GTP: step 1/1. Its function is as follows. Converts GTP to 7,8-dihydroneopterin triphosphate. This Neisseria meningitidis serogroup A / serotype 4A (strain DSM 15465 / Z2491) protein is GTP cyclohydrolase FolE2.